The sequence spans 374 residues: Putative zinc metalloprotease R01501 (374 aa).

Residue His26 participates in Zn(2+) binding. Residue Glu27 is part of the active site. A Zn(2+)-binding site is contributed by His30. 4 consecutive transmembrane segments (helical) span residues 36-55 (WSGI…LFGW), 112-134 (AATV…AVLF), 301-323 (VLNF…VPVL), and 348-367 (LAFR…AAWN). Residues 126-199 (AIAIFAVLFS…LPITVRIERE (74 aa)) enclose the PDZ domain.

It belongs to the peptidase M50B family. It depends on Zn(2+) as a cofactor.

It localises to the cell inner membrane. The chain is Putative zinc metalloprotease R01501 from Rhizobium meliloti (strain 1021) (Ensifer meliloti).